The following is a 641-amino-acid chain: Tetracycline resistance protein TetS (641 aa).

A tr-type G domain is found at 1–242 (MKIINIGILA…VITSKLFSPT (242 aa)). GTP contacts are provided by residues 10 to 17 (AHVDAGKT), 74 to 78 (DTPGH), and 128 to 131 (NKID).

It belongs to the TRAFAC class translation factor GTPase superfamily. Classic translation factor GTPase family. TetM/TetO subfamily.

Its function is as follows. Abolishes the inhibitory effect of tetracyclin on protein synthesis by a non-covalent modification of the ribosomes. The protein is Tetracycline resistance protein TetS (tetS) of Listeria monocytogenes.